A 371-amino-acid chain; its full sequence is Histidinol-phosphate aminotransferase (371 aa).

K228 is modified (N6-(pyridoxal phosphate)lysine).

Belongs to the class-II pyridoxal-phosphate-dependent aminotransferase family. Histidinol-phosphate aminotransferase subfamily. It depends on pyridoxal 5'-phosphate as a cofactor.

The enzyme catalyses L-histidinol phosphate + 2-oxoglutarate = 3-(imidazol-4-yl)-2-oxopropyl phosphate + L-glutamate. It functions in the pathway amino-acid biosynthesis; L-histidine biosynthesis; L-histidine from 5-phospho-alpha-D-ribose 1-diphosphate: step 7/9. The polypeptide is Histidinol-phosphate aminotransferase (Methanococcus aeolicus (strain ATCC BAA-1280 / DSM 17508 / OCM 812 / Nankai-3)).